The sequence spans 142 residues: Semaphorin-like protein VACWR164 (142 aa).

Residues 1–142 (MNTIKQSFST…MPQMKKILKM (142 aa)) enclose the Sema domain.

The protein belongs to the semaphorin family.

This is Semaphorin-like protein VACWR164 from Bos taurus (Bovine).